We begin with the raw amino-acid sequence, 102 residues long: Carboxysome shell protein CcmK3 (102 aa).

Residues 4-90 form the BMC domain; the sequence is AVGVIQTDGF…PPDNVETVMP (87 aa).

The protein belongs to the bacterial microcompartments protein family. CcmK subfamily. Interacts stably with CcmK4, forming heterohexamers that can make dodecamers. Heterohexamers have a 1:2 CcmK3:CcmK4 stoichiometry. Upon expression in E.coli forms oligomers that could be dimers or trimers, but never hexamers; bulky residues in the pore region probably preclude the formation of homohexamers.

It is found in the carboxysome. Its function is as follows. A probably non-essential, minor shell protein of the carboxysome, a polyhedral inclusion where RuBisCO (ribulose bisphosphate carboxylase, rbcL-rbcS) is sequestered. Hexamers form sheets that form the facets of the polyhedral carboxysome. In PCC 7418 there are several CcmK paralogs with presumably functional differences. This subunit probably only makes heterohexamers with CcmK4. Heterohexamers can also make dodecamers, formation depends on buffer conditions. This chain is Carboxysome shell protein CcmK3, found in Halothece sp. (strain PCC 7418) (Synechococcus sp. (strain PCC 7418)).